Here is a 252-residue protein sequence, read N- to C-terminus: T-box transcription factor mls-1 (252 aa).

A DNA-binding region (T-box) is located at residues 40–210 (LWRRFHNLGT…SNPFAKGFRE (171 aa)).

May interact with unc-37.

Its subcellular location is the nucleus. Its function is as follows. Probable transcription factor required for the cell fate specification of non-striated uterine muscle precursor cells. Furthermore, may function with the transcriptional corepressor unc-37. The sequence is that of T-box transcription factor mls-1 from Caenorhabditis elegans.